A 192-amino-acid polypeptide reads, in one-letter code: Probable protein adenylyltransferase y4lH (192 aa).

The region spanning 52 to 190 (LDFAHYRALH…LAPLAAEIRR (139 aa)) is the Fido domain. Residues 82–83 (KG) and 139–141 (GNG) each bind ATP.

The protein belongs to the fic family.

The enzyme catalyses L-tyrosyl-[protein] + ATP = O-(5'-adenylyl)-L-tyrosyl-[protein] + diphosphate. It catalyses the reaction L-threonyl-[protein] + ATP = 3-O-(5'-adenylyl)-L-threonyl-[protein] + diphosphate. Functionally, probable adenylyltransferase that mediates the addition of adenosine 5'-monophosphate (AMP) to specific residues of target proteins. This chain is Probable protein adenylyltransferase y4lH, found in Sinorhizobium fredii (strain NBRC 101917 / NGR234).